The chain runs to 142 residues: Protein E6 (142 aa).

Zinc fingers lie at residues 30–66 (CVFC…CTPC) and 103–139 (CFDC…CRNC).

This sequence belongs to the papillomaviridae E6 protein family. In terms of assembly, forms homodimers. Interacts with ubiquitin-protein ligase UBE3A/E6-AP; this interaction stimulates UBE3A ubiquitin activity. Interacts with host BAK1.

It is found in the host cytoplasm. The protein localises to the host nucleus. Plays a major role in the induction and maintenance of cellular transformation. E6 associates with host UBE3A/E6-AP ubiquitin-protein ligase and modulates its activity. Protects host keratinocytes from apoptosis by mediating the degradation of host BAK1. May also inhibit host immune response. The chain is Protein E6 from Homo sapiens (Human).